We begin with the raw amino-acid sequence, 323 residues long: Beta-ketoacyl-[acyl-carrier-protein] synthase III (323 aa).

Catalysis depends on residues cysteine 113 and histidine 250. The tract at residues 251–255 (QANRR) is ACP-binding. The active site involves asparagine 280.

The protein belongs to the thiolase-like superfamily. FabH family. In terms of assembly, homodimer.

It localises to the cytoplasm. The catalysed reaction is malonyl-[ACP] + acetyl-CoA + H(+) = 3-oxobutanoyl-[ACP] + CO2 + CoA. It participates in lipid metabolism; fatty acid biosynthesis. Functionally, catalyzes the condensation reaction of fatty acid synthesis by the addition to an acyl acceptor of two carbons from malonyl-ACP. Catalyzes the first condensation reaction which initiates fatty acid synthesis and may therefore play a role in governing the total rate of fatty acid production. Possesses both acetoacetyl-ACP synthase and acetyl transacylase activities. Its substrate specificity determines the biosynthesis of branched-chain and/or straight-chain of fatty acids. This Sinorhizobium medicae (strain WSM419) (Ensifer medicae) protein is Beta-ketoacyl-[acyl-carrier-protein] synthase III.